The sequence spans 131 residues: MSAPDSNSGHAHDSAQNEGAAEGTRDPFGIDRLSVDYDYLLYRIQDHVTSIQLSTTEICRQQNQLVEQGIIGDAIDINIEEMRRILQKCEELETHFDMLDQIDSIVQTFRPRLDDIVREHRELTRNTERRI.

A disordered region spans residues 1–29 (MSAPDSNSGHAHDSAQNEGAAEGTRDPFG). Residues 73 to 101 (DAIDINIEEMRRILQKCEELETHFDMLDQ) adopt a coiled-coil conformation.

The protein belongs to the BLOC1S4 family. Component of the biogenesis of lysosome-related organelles complex-1 (BLOC-1).

The protein resides in the cytoplasm. Component of the biogenesis of lysosome-related organelles complex-1 (BLOC-1), a complex that is involved in endosomal cargo sorting. This is Biogenesis of lysosome-related organelles complex 1 subunit CNL1 (CLN1) from Lachancea thermotolerans (strain ATCC 56472 / CBS 6340 / NRRL Y-8284) (Yeast).